The chain runs to 290 residues: uncharacterized protein (290 aa).

2 disordered regions span residues 1 to 98 (MLGQ…SRRV) and 209 to 236 (LSGQ…AATT). Basic and acidic residues predominate over residues 63 to 76 (KPDRVRPGQRDRIG). A compositionally biased stretch (low complexity) spans 87-97 (AGQARAASSRR). Residues 261–281 (CILTALLAVSFHSIGVVIMTS) form a helical membrane-spanning segment.

The protein resides in the membrane. This is an uncharacterized protein from Homo sapiens (Human).